A 1153-amino-acid polypeptide reads, in one-letter code: Cytosolic carboxypeptidase 1 (1153 aa).

The segment at 357-400 (NQPPGVDDVVDESDENEATEVDTENDTENEEDDTGHKTQNDDIE) is disordered. Over residues 364-389 (DVVDESDENEATEVDTENDTENEEDD) the composition is skewed to acidic residues. In terms of domain architecture, Peptidase M14 spans 774 to 1063 (YPYTYSMLKM…QFCLALLRLR (290 aa)). Zn(2+) is bound by residues H845, E848, and H942. The active-site Proton donor/acceptor is E1027. A compositionally biased stretch (acidic residues) spans 1108–1128 (AFLEEVDYSAESNDENDPELE). Residues 1108–1153 (AFLEEVDYSAESNDENDPELEPDLRDNHALPDPSSDSELSHQDSLT) are disordered. Positions 1141–1153 (SSDSELSHQDSLT) are enriched in polar residues.

The protein belongs to the peptidase M14 family. Requires Zn(2+) as cofactor.

Its subcellular location is the cytoplasm. It localises to the cytosol. The protein resides in the nucleus. The protein localises to the mitochondrion. The enzyme catalyses (L-glutamyl)(n+1)-gamma-L-glutamyl-L-glutamyl-[protein] + H2O = (L-glutamyl)(n)-gamma-L-glutamyl-L-glutamyl-[protein] + L-glutamate. The catalysed reaction is C-terminal L-alpha-aminoacyl-L-glutamyl-L-glutamyl-[tubulin] + H2O = C-terminal L-alpha-aminoacyl-L-glutamyl-[tubulin] + L-glutamate. Metallocarboxypeptidase that mediates protein deglutamylation of tubulin and non-tubulin target proteins. Catalyzes the removal of polyglutamate side chains present on the gamma-carboxyl group of glutamate residues within the C-terminal tail of alpha- and beta-tubulin. Specifically cleaves tubulin long-side-chains, while it is not able to remove the branching point glutamate. Also catalyzes the removal of polyglutamate residues from the carboxy-terminus of alpha-tubulin as well as non-tubulin proteins. The protein is Cytosolic carboxypeptidase 1 (agtpbp1) of Danio rerio (Zebrafish).